The chain runs to 678 residues: Elongation factor G 2 (678 aa).

Residues 4–278 enclose the tr-type G domain; it reads QKLRNIGIIA…AVVDYLPSPQ (275 aa). Residues 13-20, 77-81, and 131-134 each bind GTP; these read AHVDAGKT, DTPGH, and NKMD.

It belongs to the TRAFAC class translation factor GTPase superfamily. Classic translation factor GTPase family. EF-G/EF-2 subfamily.

It localises to the cytoplasm. In terms of biological role, catalyzes the GTP-dependent ribosomal translocation step during translation elongation. During this step, the ribosome changes from the pre-translocational (PRE) to the post-translocational (POST) state as the newly formed A-site-bound peptidyl-tRNA and P-site-bound deacylated tRNA move to the P and E sites, respectively. Catalyzes the coordinated movement of the two tRNA molecules, the mRNA and conformational changes in the ribosome. This chain is Elongation factor G 2, found in Hahella chejuensis (strain KCTC 2396).